The following is a 230-amino-acid chain: UPF0173 metal-dependent hydrolase Pden_0574 (230 aa).

Belongs to the UPF0173 family.

The sequence is that of UPF0173 metal-dependent hydrolase Pden_0574 from Paracoccus denitrificans (strain Pd 1222).